Consider the following 132-residue polypeptide: ATP synthase epsilon chain (132 aa).

The protein belongs to the ATPase epsilon chain family. F-type ATPases have 2 components, CF(1) - the catalytic core - and CF(0) - the membrane proton channel. CF(1) has five subunits: alpha(3), beta(3), gamma(1), delta(1), epsilon(1). CF(0) has three main subunits: a, b and c.

It is found in the cell membrane. Functionally, produces ATP from ADP in the presence of a proton gradient across the membrane. The protein is ATP synthase epsilon chain (atpC) of Geobacillus stearothermophilus (Bacillus stearothermophilus).